A 450-amino-acid chain; its full sequence is UDP-N-acetylmuramoylalanine--D-glutamate ligase (450 aa).

119–125 is an ATP binding site; the sequence is GSNGKTT.

Belongs to the MurCDEF family.

The protein resides in the cytoplasm. The catalysed reaction is UDP-N-acetyl-alpha-D-muramoyl-L-alanine + D-glutamate + ATP = UDP-N-acetyl-alpha-D-muramoyl-L-alanyl-D-glutamate + ADP + phosphate + H(+). Its pathway is cell wall biogenesis; peptidoglycan biosynthesis. Cell wall formation. Catalyzes the addition of glutamate to the nucleotide precursor UDP-N-acetylmuramoyl-L-alanine (UMA). The chain is UDP-N-acetylmuramoylalanine--D-glutamate ligase from Streptococcus pneumoniae serotype 4 (strain ATCC BAA-334 / TIGR4).